Consider the following 159-residue polypeptide: uncharacterized protein (159 aa).

The next 2 helical transmembrane spans lie at 59–79 (IGALAAMLAVLSFALGCALVY) and 91–113 (VFSVLSGLLYGGGAVLWGLRRVC).

The protein localises to the cell membrane. This is an uncharacterized protein from Treponema pallidum (strain Nichols).